The chain runs to 919 residues: Aminodeoxychorismate synthase, chloroplastic (919 aa).

The transit peptide at 1 to 45 directs the protein to the chloroplast; it reads MNMNFSFCSTSSELSYPSENVLRFSVASRLFSPKWKKSFISLPCR. One can recognise a Glutamine amidotransferase type-1 domain in the interval 86 to 342; the sequence is RTLLIDNYDS…KDITVNYWSR (257 aa). The Nucleophile role is filled by Cys-172. Catalysis depends on residues His-316 and Glu-318. A PABB component region spans residues 436 to 910; the sequence is IFMELFGKNR…KTRAPANAVM (475 aa).

This sequence in the C-terminal section; belongs to the anthranilate synthase component I family.

It is found in the plastid. The protein localises to the chloroplast. It carries out the reaction chorismate + L-glutamine = 4-amino-4-deoxychorismate + L-glutamate. Its pathway is cofactor biosynthesis; tetrahydrofolate biosynthesis; 4-aminobenzoate from chorismate: step 1/2. Its activity is regulated as follows. Activated by chorismate and inhibited by dihydrofolate and methotrexate. Its function is as follows. Bifunctional enzyme that catalyzes the biosynthesis of 4-amino-4-deoxychorismate (ADC) from chorismate and glutamine. In the first step, a glutamine amidotransferase generates ammonia that is channelled between the binding sites of glutamine and chorismate and used along with chorismate in the second step, catalyzed by aminodeoxychorismate synthase, to produce ADC. Required for the synthesis of 4-aminobenzoate (PABA), an important component in tetrahydrofolate biosynthesis. Does not possess ADC lyase activity. The protein is Aminodeoxychorismate synthase, chloroplastic (ADCS) of Arabidopsis thaliana (Mouse-ear cress).